We begin with the raw amino-acid sequence, 121 residues long: Small ribosomal subunit protein uS13 (121 aa).

The segment at 91 to 121 (HRRGLPVRGQNSKNNARTRKGPRRTVANKKK) is disordered. Basic residues predominate over residues 106–121 (ARTRKGPRRTVANKKK).

The protein belongs to the universal ribosomal protein uS13 family. As to quaternary structure, part of the 30S ribosomal subunit. Forms a loose heterodimer with protein S19. Forms two bridges to the 50S subunit in the 70S ribosome.

Its function is as follows. Located at the top of the head of the 30S subunit, it contacts several helices of the 16S rRNA. In the 70S ribosome it contacts the 23S rRNA (bridge B1a) and protein L5 of the 50S subunit (bridge B1b), connecting the 2 subunits; these bridges are implicated in subunit movement. Contacts the tRNAs in the A and P-sites. This Bacillus mycoides (strain KBAB4) (Bacillus weihenstephanensis) protein is Small ribosomal subunit protein uS13.